A 502-amino-acid chain; its full sequence is Lysine--tRNA ligase (502 aa).

Residues E411 and E418 each coordinate Mg(2+).

The protein belongs to the class-II aminoacyl-tRNA synthetase family. In terms of assembly, homodimer. The cofactor is Mg(2+).

It is found in the cytoplasm. It catalyses the reaction tRNA(Lys) + L-lysine + ATP = L-lysyl-tRNA(Lys) + AMP + diphosphate. This Chromohalobacter salexigens (strain ATCC BAA-138 / DSM 3043 / CIP 106854 / NCIMB 13768 / 1H11) protein is Lysine--tRNA ligase.